The sequence spans 538 residues: Phosphoenolpyruvate carboxykinase (ATP) (538 aa).

Residues Arg64, Tyr206, and Lys212 each contribute to the substrate site. ATP is bound by residues Lys212, His231, and 247–255 (GLSGTGKTT). Positions 212 and 231 each coordinate Mn(2+). Asp268 serves as a coordination point for Mn(2+). Residues Glu296, Arg332, 448 to 449 (RI), and Thr454 each bind ATP. Arg332 contacts substrate.

Belongs to the phosphoenolpyruvate carboxykinase (ATP) family. Monomer. Mn(2+) is required as a cofactor.

It is found in the cytoplasm. The enzyme catalyses oxaloacetate + ATP = phosphoenolpyruvate + ADP + CO2. The protein operates within carbohydrate biosynthesis; gluconeogenesis. Its function is as follows. Involved in the gluconeogenesis. Catalyzes the conversion of oxaloacetate (OAA) to phosphoenolpyruvate (PEP) through direct phosphoryl transfer between the nucleoside triphosphate and OAA. This chain is Phosphoenolpyruvate carboxykinase (ATP), found in Enterobacter sp. (strain 638).